The sequence spans 284 residues: Gap junction beta-1 protein (284 aa).

The Cytoplasmic portion of the chain corresponds to 1 to 22 (MNWTGLYTLLSGVNRHSTAIGR). The helical transmembrane segment at 23 to 45 (VWLSVIFIFRIMVLVVAAESVWG) threads the bilayer. Residues 46 to 75 (DEKSSFICNTLQPGCNSVCYDHFFPISHVR) lie on the Extracellular side of the membrane. A helical membrane pass occupies residues 76-95 (LWSLQLILVSTPALLVAMHV). The Cytoplasmic portion of the chain corresponds to 96-130 (AHQQHIEKKMLRLEGHGDPLHLEEVKRHKVHISGT). The helical transmembrane segment at 131-153 (LWWTYVISVVFRLLFEAAFMYVF) threads the bilayer. The Extracellular portion of the chain corresponds to 154-191 (YLLYPGYAMVRLVKCDAYPCPNTVDCFVSRPTEKTIFT). The helical transmembrane segment at 192-214 (VFMLAASGICIILNVAEVVYLIF) threads the bilayer. Topologically, residues 215 to 284 (RACARRAQRR…AEKSDRCSAC (70 aa)) are cytoplasmic. S233, S259, S267, and S278 each carry phosphoserine.

Belongs to the connexin family. Beta-type (group I) subfamily. A connexon is composed of a hexamer of connexins. Interacts with CNST.

The protein localises to the cell membrane. It localises to the cell junction. Its subcellular location is the gap junction. Its function is as follows. One gap junction consists of a cluster of closely packed pairs of transmembrane channels, the connexons, through which materials of low MW diffuse from one cell to a neighboring cell. This Bos taurus (Bovine) protein is Gap junction beta-1 protein (GJB1).